A 499-amino-acid chain; its full sequence is Lysine--tRNA ligase (499 aa).

Glutamate 407 and glutamate 414 together coordinate Mg(2+).

Belongs to the class-II aminoacyl-tRNA synthetase family. As to quaternary structure, homodimer. The cofactor is Mg(2+).

It localises to the cytoplasm. The catalysed reaction is tRNA(Lys) + L-lysine + ATP = L-lysyl-tRNA(Lys) + AMP + diphosphate. The sequence is that of Lysine--tRNA ligase from Lactiplantibacillus plantarum (strain ATCC BAA-793 / NCIMB 8826 / WCFS1) (Lactobacillus plantarum).